We begin with the raw amino-acid sequence, 320 residues long: MEKRNTYDWVTRWVIASFSILTISYMITWTSISNAYPIFAQKSYESPREATGRIVCANCHLAKKSVEIEVPQSVLPNSVFEAIVKIPYDTQIKQVLANGKKGGLNVGAVLILPEGFELAPSDRISPEIKQKIGNLNFQNYSPSQKNILVIGPIPGQKYREIVFPILSPDPATKKEVNFRKYPIYVGGNRGRGQVYPDGSKSNNTVYNASATGRVSQILRKDKGGYEVTIENISQGRSVVDIIPPGPELLVSEGDFVKVDQPLTNNPNVGGFGQVNAEIVLQDPFRIQGLLVFLASVVLAQIFLVLKKKQFEKVQLAEMNF.

The first 35 residues, 1-35, serve as a signal peptide directing secretion; it reads MEKRNTYDWVTRWVIASFSILTISYMITWTSISNA. Residues Y36, C56, C59, and H60 each coordinate heme. A helical transmembrane segment spans residues 286 to 306; sequence IQGLLVFLASVVLAQIFLVLK.

This sequence belongs to the cytochrome f family. As to quaternary structure, the 4 large subunits of the cytochrome b6-f complex are cytochrome b6, subunit IV (17 kDa polypeptide, petD), cytochrome f and the Rieske protein, while the 4 small subunits are PetG, PetL, PetM and PetN. The complex functions as a dimer. The cofactor is heme.

The protein resides in the plastid. It is found in the chloroplast thylakoid membrane. Functionally, component of the cytochrome b6-f complex, which mediates electron transfer between photosystem II (PSII) and photosystem I (PSI), cyclic electron flow around PSI, and state transitions. In Welwitschia mirabilis (Tree tumbo), this protein is Cytochrome f.